The sequence spans 157 residues: NudC domain-containing protein 2 (157 aa).

The residue at position 2 (Ser2) is an N-acetylserine. A CS domain is found at 14–104 (CGTPWGQWYQ…DAANCWTSLL (91 aa)). The disordered stretch occupies residues 134-157 (FDFSGAEISGNYTKGGPDFSNLEK). Phosphoserine is present on Ser142. At Tyr145 the chain carries Phosphotyrosine.

Interacts with LIS1.

The protein localises to the chromosome. The protein resides in the centromere. It localises to the kinetochore. It is found in the cytoplasm. Its subcellular location is the cytoskeleton. The protein localises to the microtubule organizing center. The protein resides in the centrosome. It localises to the spindle pole. In terms of biological role, may regulate the LIS1/dynein pathway by stabilizing LIS1 with Hsp90 chaperone. The polypeptide is NudC domain-containing protein 2 (Nudcd2) (Mus musculus (Mouse)).